We begin with the raw amino-acid sequence, 2238 residues long: COPII coat assembly protein SEC16 (2238 aa).

A compositionally biased stretch (basic residues) spans 1-20; the sequence is MTPEAKRKKNQKKKLRQKQK. Disordered stretches follow at residues 1-115, 135-161, 173-255, 297-363, 394-596, 642-666, 757-787, 824-878, 892-988, 1547-1577, 1600-1703, 1732-1766, 1809-1901, 1928-2102, and 2133-2238; these read MTPE…DNYH, GGSI…SDPD, GQPL…DYPK, EEVD…DTHK, DDEQ…TSAD, MSTS…SINT, FTNQ…PAQI, GNSA…SPST, LVHS…TVLP, PPTN…NRPN, GKKS…PPIQ, TASP…MDPK, NEEE…PKGK, RPQE…GWLK, and KNAS…MENL. The span at 45–87 shows a compositional bias: polar residues; the sequence is LTSNSNVSTPDYTSNFEISVTSTQEVNVDSQLSQNQNSDNFIN. A compositionally biased stretch (basic and acidic residues) spans 100–115; the sequence is FDSHEDIESEMKDNYH. Polar residues-rich tracts occupy residues 135–144 and 217–236; these read GGSIDSSNTV and LASN…NLLT. 2 stretches are compositionally biased toward basic and acidic residues: residues 238–255 and 297–322; these read NRLE…DYPK and EEVD…HSEE. Residues 325–335 show a composition bias toward polar residues; that stretch reads TSSVSTQTGMA. The span at 351 to 363 shows a compositional bias: basic and acidic residues; that stretch reads KMEERNINSDTHK. A compositionally biased stretch (acidic residues) spans 394–404; the sequence is DDEQSVNDLQD. Polar residues predominate over residues 405 to 448; it reads ESSLLQEETTFSQIPKNEVNTENQENIGSESVSKINVANENSME. 2 stretches are compositionally biased toward basic and acidic residues: residues 480-513 and 535-553; these read EVSH…KKED and MKSE…KEES. Polar residues-rich tracts occupy residues 556 to 596, 657 to 666, and 757 to 784; these read NVRT…TSAD, RPSSHSSINT, and FTNQ…SVNP. Low complexity predominate over residues 824-842; it reads GNSAVSTTSGKSVGTSVAT. Polar residues-rich tracts occupy residues 843 to 878, 893 to 936, 946 to 957, 1548 to 1565, 1610 to 1638, 1732 to 1747, 1824 to 1849, and 1936 to 1948; these read KQNP…SPST, VHSS…SQND, STGQYAGYSSHS, PTNT…QRAV, NRAS…STPN, TASP…SNYS, VDQS…TVSI, and TSSI…QISN. The segment covering 1963–1972 has biased composition (basic and acidic residues); it reads VELKQDEVSK. The segment covering 2034–2053 has biased composition (acidic residues); sequence QYDDVVEEDSDDSDDSEDDS.

It belongs to the SEC16 family.

The protein resides in the endoplasmic reticulum membrane. Involved in the initiation of assembly of the COPII coat required for the formation of transport vesicles from the endoplasmic reticulum (ER) and the selection of cargo molecules. Also involved in autophagy. The protein is COPII coat assembly protein SEC16 (SEC16) of Candida glabrata (strain ATCC 2001 / BCRC 20586 / JCM 3761 / NBRC 0622 / NRRL Y-65 / CBS 138) (Yeast).